The primary structure comprises 485 residues: Cytolytic protein enterolobin (485 aa).

2 disulfides stabilise this stretch: Cys34–Cys98 and Cys183–Cys189.

Belongs to the aerolysin family. In terms of assembly, oligomerizes as a hexamer. Post-translationally, the N-terminus is blocked.

Its function is as follows. Cytolytic protein with insecticidal activity. Acts as a pro-inflammatory agent. The polypeptide is Cytolytic protein enterolobin (Enterolobium contortisiliquum (Pacara earpod tree)).